The primary structure comprises 51 residues: Ovomucoid (51 aa).

The 49-residue stretch at 1 to 49 (VDCSEYPQPACTTERRPVCGSNNKTYSNKCNFCNAVVKSNGTLTVSHFG) folds into the Kazal-like domain. Disulfide bonds link cysteine 3–cysteine 33, cysteine 11–cysteine 30, and cysteine 19–cysteine 51. Asparagine 40 carries an N-linked (GlcNAc...) asparagine glycan.

Its subcellular location is the secreted. This is Ovomucoid from Polyplectron napoleonis (Palawan peacock-pheasant).